Here is a 349-residue protein sequence, read N- to C-terminus: Protein RecA (349 aa).

Residue 66-73 (GPESSGKT) coordinates ATP.

This sequence belongs to the RecA family.

The protein resides in the cytoplasm. Can catalyze the hydrolysis of ATP in the presence of single-stranded DNA, the ATP-dependent uptake of single-stranded DNA by duplex DNA, and the ATP-dependent hybridization of homologous single-stranded DNAs. It interacts with LexA causing its activation and leading to its autocatalytic cleavage. The protein is Protein RecA of Psychrobacter sp. (strain PRwf-1).